We begin with the raw amino-acid sequence, 1076 residues long: Enhancer of mRNA-decapping protein 4-like protein pdc1 (1076 aa).

Composition is skewed to low complexity over residues 1–19 and 53–69; these read MNEQ…LPNL and SSLL…SNQS. Disordered regions lie at residues 1–82, 95–127, and 139–204; these read MNEQ…ASHS, GAKP…FNPV, and STGP…AEEQ. The segment covering 70 to 82 has biased composition (polar residues); the sequence is PSNSGPKYYASHS. The segment covering 153 to 173 has biased composition (polar residues); that stretch reads NDSQDTAFQSSRNMPSDTSVA. Over residues 174-184 the composition is skewed to low complexity; that stretch reads SPDYSHSQSSS. Residues 185 to 195 show a composition bias toward polar residues; that stretch reads PIANYQESGNS. 2 WD repeats span residues 292–334 and 402–441; these read NSPN…STSE and DTGI…PSTP. 2 disordered regions span residues 666-714 and 892-934; these read RHST…SPSS and TAPD…PAQG. Residues 669–688 are compositionally biased toward polar residues; it reads TASPSTVNSGFSTPRSQATG. Phosphoserine occurs at positions 671 and 673. At Thr-674 the chain carries Phosphothreonine. A compositionally biased stretch (basic and acidic residues) spans 695–706; sequence DKGERFETKDKS. Positions 789 to 1076 are interaction with dcp2; the sequence is MQVALKEEIA…ISEISVASSN (288 aa). Ser-1075 carries the post-translational modification Phosphoserine.

This sequence belongs to the WD repeat EDC4 family. As to quaternary structure, interacts with dcp2; via C-terminus.

It localises to the cytoplasm. Its subcellular location is the P-body. Functionally, involved in P-body formation. Acts as a functional homolog of human EDC4, which plays a role in mRNA decapping in the process of mRNA degradation. Enhances the decapping activity of dcp2. Together with edc3, acts as a scaffolding protein sufficient for the phase transition of the components of the 5' to 3' mRNA degradation machinery to form P-bodies. Intermolecular interactions between the edc3 Sm domain and at least 10 helical leucine-rich motifs in dcp2 and pdc1 build the core of the interaction network of this spontaneous clustering process. The sequence is that of Enhancer of mRNA-decapping protein 4-like protein pdc1 from Schizosaccharomyces pombe (strain 972 / ATCC 24843) (Fission yeast).